We begin with the raw amino-acid sequence, 425 residues long: Enolase (425 aa).

Position 163 (glutamine 163) interacts with (2R)-2-phosphoglycerate. Residue glutamate 205 is the Proton donor of the active site. Mg(2+) is bound by residues aspartate 242, glutamate 285, and aspartate 312. The (2R)-2-phosphoglycerate site is built by lysine 337, arginine 366, serine 367, and lysine 388. The active-site Proton acceptor is the lysine 337.

This sequence belongs to the enolase family. Mg(2+) is required as a cofactor.

The protein localises to the cytoplasm. Its subcellular location is the secreted. It is found in the cell surface. It catalyses the reaction (2R)-2-phosphoglycerate = phosphoenolpyruvate + H2O. It participates in carbohydrate degradation; glycolysis; pyruvate from D-glyceraldehyde 3-phosphate: step 4/5. Its function is as follows. Catalyzes the reversible conversion of 2-phosphoglycerate (2-PG) into phosphoenolpyruvate (PEP). It is essential for the degradation of carbohydrates via glycolysis. This chain is Enolase, found in Cereibacter sphaeroides (strain ATCC 17025 / ATH 2.4.3) (Rhodobacter sphaeroides).